The following is a 264-amino-acid chain: TLC domain-containing protein 4-B (264 aa).

The next 6 helical transmembrane spans lie at 6 to 26 (VYVVAGSFVGFQLFFSCVSPV), 50 to 70 (LVSTVHALIVGLFCLYILWYD), 84 to 104 (LVKLNVAITCGYLFYDLLLLA), 110 to 130 (MGDVFFVCHHLAALYAYGYVL), 169 to 189 (LVVANGIAMAVVFFLVRIAVM), and 210 to 230 (LAIQVAWIISCVCLDILNIIW). Residues 41–243 (NKLNDWNSRL…IARGCYKVIT (203 aa)) form the TLC domain.

Belongs to the TLCD4 family.

Its subcellular location is the membrane. This is TLC domain-containing protein 4-B (tlcd4b) from Danio rerio (Zebrafish).